The chain runs to 1193 residues: Protogenin (1193 aa).

The signal sequence occupies residues 1-23 (MAPPVRPGMLPLLLLLLLPPLGS). 4 Ig-like domains span residues 24–124 (VPGV…AHLT), 126–217 (STIS…ASLT), 230–317 (PTII…ATLT), and 322–406 (PSFV…ARLT). Residues 24–944 (VPGVWSFSEL…YYHLDQKSMT (921 aa)) are Extracellular-facing. 2 cysteine pairs are disulfide-bonded: Cys-54–Cys-107 and Cys-150–Cys-200. N-linked (GlcNAc...) asparagine glycosylation is present at Asn-84. An N-linked (GlcNAc...) asparagine glycan is attached at Asn-238. Cystine bridges form between Cys-251/Cys-299 and Cys-343/Cys-390. 5 Fibronectin type-III domains span residues 416–510 (APYN…TLED), 512–608 (PLRP…TPKA), 613–712 (APKS…VRDR), 719–812 (PPHH…TLPE), and 817–912 (PPVG…VLPK). Residue Asn-625 is glycosylated (N-linked (GlcNAc...) asparagine). Residues 945–965 (GIAVGVGIALTCILICVLILI) traverse the membrane as a helical segment. Residues 966-1193 (YRSKARKSSA…LRHAAESVPV (228 aa)) are Cytoplasmic-facing. 2 disordered regions span residues 974-1018 (SASK…PMMP) and 1078-1193 (VLIS…SVPV). 2 stretches are compositionally biased toward polar residues: residues 978-990 (TTQS…SRAS) and 1086-1095 (PSSPGQTTSF). The segment covering 1105-1133 (DTEHSANSEGSHETGDSGRFSHESNDEIH) has biased composition (basic and acidic residues). Residues 1136-1150 (SVISSTPPTSNSLTC) are compositionally biased toward polar residues.

Belongs to the immunoglobulin superfamily. DCC family.

The protein resides in the membrane. Functionally, may play a role in anteroposterior axis elongation. This is Protogenin from Rattus norvegicus (Rat).